The following is a 318-amino-acid chain: D-alanine--D-alanine ligase (318 aa).

The ATP-grasp domain maps to K117–E315. Residue A146–T201 participates in ATP binding. Positions 268, 282, and 284 each coordinate Mg(2+).

This sequence belongs to the D-alanine--D-alanine ligase family. The cofactor is Mg(2+). It depends on Mn(2+) as a cofactor.

The protein localises to the cytoplasm. It catalyses the reaction 2 D-alanine + ATP = D-alanyl-D-alanine + ADP + phosphate + H(+). The protein operates within cell wall biogenesis; peptidoglycan biosynthesis. Cell wall formation. This is D-alanine--D-alanine ligase from Xanthomonas axonopodis pv. citri (strain 306).